The sequence spans 443 residues: 3-isopropylmalate dehydratase large subunit (443 aa).

[4Fe-4S] cluster is bound by residues cysteine 347, cysteine 407, and cysteine 410.

It belongs to the aconitase/IPM isomerase family. LeuC type 1 subfamily. As to quaternary structure, heterodimer of LeuC and LeuD. It depends on [4Fe-4S] cluster as a cofactor.

The catalysed reaction is (2R,3S)-3-isopropylmalate = (2S)-2-isopropylmalate. Its pathway is amino-acid biosynthesis; L-leucine biosynthesis; L-leucine from 3-methyl-2-oxobutanoate: step 2/4. Functionally, catalyzes the isomerization between 2-isopropylmalate and 3-isopropylmalate, via the formation of 2-isopropylmaleate. This is 3-isopropylmalate dehydratase large subunit from Buchnera aphidicola subsp. Uroleucon sonchi.